The following is a 142-amino-acid chain: Large ribosomal subunit protein uL11 (142 aa).

The protein belongs to the universal ribosomal protein uL11 family. Part of the ribosomal stalk of the 50S ribosomal subunit. Interacts with L10 and the large rRNA to form the base of the stalk. L10 forms an elongated spine to which L12 dimers bind in a sequential fashion forming a multimeric L10(L12)X complex. In terms of processing, one or more lysine residues are methylated.

Its function is as follows. Forms part of the ribosomal stalk which helps the ribosome interact with GTP-bound translation factors. The protein is Large ribosomal subunit protein uL11 of Mannheimia succiniciproducens (strain KCTC 0769BP / MBEL55E).